A 109-amino-acid polypeptide reads, in one-letter code: Spermidine export protein MdtI (109 aa).

4 consecutive transmembrane segments (helical) span residues 6-26 (LQHI…NIWL), 36-56 (VYGV…GQAV), 64-84 (AYAL…WIMF), and 88-108 (LNRK…IIKL).

The protein belongs to the drug/metabolite transporter (DMT) superfamily. Small multidrug resistance (SMR) (TC 2.A.7.1) family. MdtI subfamily. In terms of assembly, forms a complex with MdtJ.

It is found in the cell inner membrane. In terms of biological role, catalyzes the excretion of spermidine. This Cronobacter sakazakii (strain ATCC BAA-894) (Enterobacter sakazakii) protein is Spermidine export protein MdtI (mdtI).